The chain runs to 240 residues: Probable transcriptional regulatory protein BLi02909/BL01150 (240 aa).

A compositionally biased stretch (basic residues) spans 1–14; the sequence is MAGHSKWKNIQRRK. The interval 1–21 is disordered; that stretch reads MAGHSKWKNIQRRKNAQDAKR.

It belongs to the TACO1 family.

It localises to the cytoplasm. This chain is Probable transcriptional regulatory protein BLi02909/BL01150, found in Bacillus licheniformis (strain ATCC 14580 / DSM 13 / JCM 2505 / CCUG 7422 / NBRC 12200 / NCIMB 9375 / NCTC 10341 / NRRL NRS-1264 / Gibson 46).